A 638-amino-acid polypeptide reads, in one-letter code: MNDTTHATDAAHSPHSTQQHSMRALAIAAIGVVFGDIGTSPLYSLKEAFSPAHGIPLTEGSILGVISLLFWAILLVVGVKYLLFVMRADNNGEGGVLALMALSLRPLDSKTRVAGALMALGIFGACMFYGDAVITPAISVMSAVEGLEIATPHLSHLVLPITIVILIALFWIQRHGTALVGKLFGPIMVLWFVVIAALGVYHIVRVPGIIAAINPYYAASFMADHLLQAYVVLGSVVLVLTGAEALYADMGHFGAKPIRYAAYGLVMPSLVLNYFGQGALLIQNPKAIENPFFLLAPEWGLLPLVVLSTVATVIASQAVISGAYSLTSQAIQLGYVPRMKVLHTSELAIGQIYVPVVNWLLLAVILCIVVGFKSSDNLAAAYGIAVTATMVITTVLACVVMVKVWNWNRLLVGAIIAVFLAIDLGFFGANLLKVAQGGWLPLGIGALLFFLLMTWYKGRHIVKERTAADGIPLEPFLQGLLAHPPHRVSGTAIYLTGNDKLVPVSLLHNLKHNKVLHERTIFLTFVTRDIPYVRDDKRQSARDAGGGLYIVKAEYGFNETPDVKAVLEEFGRTHDMTFELMDTSFFLARETVVPTHLPGMSIWRERVFAWMHQNAAKPTDFFAIPANRVVELGTKIEI.

The next 12 helical transmembrane spans lie at 25–45 (LAIA…LYSL), 65–85 (VISL…LLFV), 114–134 (AGAL…DAVI), 152–172 (PHLS…LFWI), 184–204 (FGPI…YHIV), 226–246 (LLQA…AEAL), 262–282 (AYGL…ALLI), 291–311 (PFFL…STVA), 352–372 (IYVP…VVGF), 382–402 (YGIA…VVMV), 410–430 (LLVG…FGAN), and 434–454 (VAQG…LLMT).

The protein belongs to the HAK/KUP transporter (TC 2.A.72) family.

It localises to the cell inner membrane. The catalysed reaction is K(+)(in) + H(+)(in) = K(+)(out) + H(+)(out). Functionally, transport of potassium into the cell. Likely operates as a K(+):H(+) symporter. In Burkholderia cenocepacia (strain HI2424), this protein is Probable potassium transport system protein Kup.